Here is a 213-residue protein sequence, read N- to C-terminus: ATP synthase peripheral stalk subunit OSCP, mitochondrial (213 aa).

Residues 1-23 (MAAPAVSGLSRQVRCFSTSVVRP) constitute a mitochondrion transit peptide. The SIFI-degron signature appears at 5–23 (AVSGLSRQVRCFSTSVVRP). Lys54, Lys60, Lys70, and Lys73 each carry N6-acetyllysine. Lys90 is subject to N6-succinyllysine. N6-acetyllysine; alternate occurs at positions 158 and 162. Lys158 and Lys162 each carry N6-succinyllysine; alternate. An N6-acetyllysine mark is found at Lys172, Lys176, and Lys192. Lys199 carries the post-translational modification N6-succinyllysine.

Belongs to the ATPase delta chain family. In terms of assembly, component of the ATP synthase complex composed at least of ATP5F1A/subunit alpha, ATP5F1B/subunit beta, ATP5MC1/subunit c (homooctomer), MT-ATP6/subunit a, MT-ATP8/subunit 8, ATP5ME/subunit e, ATP5MF/subunit f, ATP5MG/subunit g, ATP5MK/subunit k, ATP5MJ/subunit j, ATP5F1C/subunit gamma, ATP5F1D/subunit delta, ATP5F1E/subunit epsilon, ATP5PF/subunit F6, ATP5PB/subunit b, ATP5PD/subunit d, ATP5PO/subunit OSCP. ATP synthase complex consists of a soluble F(1) head domain (subunits alpha(3) and beta(3)) - the catalytic core - and a membrane F(0) domain - the membrane proton channel (subunits c, a, 8, e, f, g, k and j). These two domains are linked by a central stalk (subunits gamma, delta, and epsilon) rotating inside the F1 region and a stationary peripheral stalk (subunits F6, b, d, and OSCP). Acetylation at Lys-162 decreases ATP production. Deacetylated by SIRT3. In terms of processing, in response to mitochondrial stress, the precursor protein is ubiquitinated by the SIFI complex in the cytoplasm before mitochondrial import, leading to its degradation. Within the SIFI complex, UBR4 initiates ubiquitin chain that are further elongated or branched by KCMF1.

It localises to the mitochondrion. Its subcellular location is the mitochondrion inner membrane. Functionally, subunit OSCP, of the mitochondrial membrane ATP synthase complex (F(1)F(0) ATP synthase or Complex V) that produces ATP from ADP in the presence of a proton gradient across the membrane which is generated by electron transport complexes of the respiratory chain. ATP synthase complex consist of a soluble F(1) head domain - the catalytic core - and a membrane F(1) domain - the membrane proton channel. These two domains are linked by a central stalk rotating inside the F(1) region and a stationary peripheral stalk. During catalysis, ATP synthesis in the catalytic domain of F(1) is coupled via a rotary mechanism of the central stalk subunits to proton translocation. In vivo, can only synthesize ATP although its ATP hydrolase activity can be activated artificially in vitro. Part of the complex F(0) domain. Part of the complex F(0) domain and the peripheric stalk, which acts as a stator to hold the catalytic alpha(3)beta(3) subcomplex and subunit a/ATP6 static relative to the rotary elements. The sequence is that of ATP synthase peripheral stalk subunit OSCP, mitochondrial from Homo sapiens (Human).